Reading from the N-terminus, the 274-residue chain is Large ribosomal subunit protein uL2 (274 aa).

The disordered stretch occupies residues 223–274 (VAMNPVDHPHGGGEGRTSGGRHPVSPWGMPTKGFKTRKNKSTDKYIVRRRNK).

It belongs to the universal ribosomal protein uL2 family. As to quaternary structure, part of the 50S ribosomal subunit. Forms a bridge to the 30S subunit in the 70S ribosome.

Functionally, one of the primary rRNA binding proteins. Required for association of the 30S and 50S subunits to form the 70S ribosome, for tRNA binding and peptide bond formation. It has been suggested to have peptidyltransferase activity; this is somewhat controversial. Makes several contacts with the 16S rRNA in the 70S ribosome. The polypeptide is Large ribosomal subunit protein uL2 (Aliivibrio fischeri (strain ATCC 700601 / ES114) (Vibrio fischeri)).